The primary structure comprises 275 residues: Large ribosomal subunit protein uL2 (275 aa).

The segment at 221–275 is disordered; that stretch reads VRGVAMNPVDHPMGGGEGKSSGGRHPCSPWGQQSKGVRTRNNKRTDQFIVKRRSK.

Belongs to the universal ribosomal protein uL2 family. In terms of assembly, part of the 50S ribosomal subunit. Forms a bridge to the 30S subunit in the 70S ribosome.

Functionally, one of the primary rRNA binding proteins. Required for association of the 30S and 50S subunits to form the 70S ribosome, for tRNA binding and peptide bond formation. It has been suggested to have peptidyltransferase activity; this is somewhat controversial. Makes several contacts with the 16S rRNA in the 70S ribosome. This chain is Large ribosomal subunit protein uL2, found in Desulfosudis oleivorans (strain DSM 6200 / JCM 39069 / Hxd3) (Desulfococcus oleovorans).